A 557-amino-acid chain; its full sequence is Dihydroxy-acid dehydratase (557 aa).

Asp78 is a Mg(2+) binding site. Residue Cys119 coordinates [2Fe-2S] cluster. Mg(2+)-binding residues include Asp120 and Lys121. An N6-carboxylysine modification is found at Lys121. Position 191 (Cys191) interacts with [2Fe-2S] cluster. Glu442 serves as a coordination point for Mg(2+). Residue Ser468 is the Proton acceptor of the active site.

It belongs to the IlvD/Edd family. In terms of assembly, homodimer. [2Fe-2S] cluster serves as cofactor. Requires Mg(2+) as cofactor.

It catalyses the reaction (2R)-2,3-dihydroxy-3-methylbutanoate = 3-methyl-2-oxobutanoate + H2O. The catalysed reaction is (2R,3R)-2,3-dihydroxy-3-methylpentanoate = (S)-3-methyl-2-oxopentanoate + H2O. It participates in amino-acid biosynthesis; L-isoleucine biosynthesis; L-isoleucine from 2-oxobutanoate: step 3/4. The protein operates within amino-acid biosynthesis; L-valine biosynthesis; L-valine from pyruvate: step 3/4. Functions in the biosynthesis of branched-chain amino acids. Catalyzes the dehydration of (2R,3R)-2,3-dihydroxy-3-methylpentanoate (2,3-dihydroxy-3-methylvalerate) into 2-oxo-3-methylpentanoate (2-oxo-3-methylvalerate) and of (2R)-2,3-dihydroxy-3-methylbutanoate (2,3-dihydroxyisovalerate) into 2-oxo-3-methylbutanoate (2-oxoisovalerate), the penultimate precursor to L-isoleucine and L-valine, respectively. The chain is Dihydroxy-acid dehydratase from Syntrophobacter fumaroxidans (strain DSM 10017 / MPOB).